Here is a 296-residue protein sequence, read N- to C-terminus: tRNA dimethylallyltransferase (296 aa).

2–9 is an ATP binding site; the sequence is GPTASGKT. Residue 4–9 coordinates substrate; that stretch reads TASGKT. Interaction with substrate tRNA regions lie at residues 27-30, 151-155, and 232-237; these read DSAL, QRLSR, and RCVGYR.

This sequence belongs to the IPP transferase family. Monomer. Requires Mg(2+) as cofactor.

The enzyme catalyses adenosine(37) in tRNA + dimethylallyl diphosphate = N(6)-dimethylallyladenosine(37) in tRNA + diphosphate. Functionally, catalyzes the transfer of a dimethylallyl group onto the adenine at position 37 in tRNAs that read codons beginning with uridine, leading to the formation of N6-(dimethylallyl)adenosine (i(6)A). In Shewanella sp. (strain MR-4), this protein is tRNA dimethylallyltransferase.